The sequence spans 615 residues: Chaperone protein DnaK (615 aa).

Thr174 carries the phosphothreonine; by autocatalysis modification. The disordered stretch occupies residues 581–615 (QAAPKDGAEGDAKSADDNTVDGDFEEVDPNKDDKK). Basic and acidic residues predominate over residues 586–596 (DGAEGDAKSAD). The segment covering 598 to 607 (NTVDGDFEEV) has biased composition (acidic residues).

The protein belongs to the heat shock protein 70 family.

Acts as a chaperone. The chain is Chaperone protein DnaK from Leuconostoc mesenteroides subsp. mesenteroides (strain ATCC 8293 / DSM 20343 / BCRC 11652 / CCM 1803 / JCM 6124 / NCDO 523 / NBRC 100496 / NCIMB 8023 / NCTC 12954 / NRRL B-1118 / 37Y).